An 89-amino-acid chain; its full sequence is Small ribosomal subunit protein uS15 (89 aa).

It belongs to the universal ribosomal protein uS15 family. In terms of assembly, part of the 30S ribosomal subunit. Forms a bridge to the 50S subunit in the 70S ribosome, contacting the 23S rRNA.

One of the primary rRNA binding proteins, it binds directly to 16S rRNA where it helps nucleate assembly of the platform of the 30S subunit by binding and bridging several RNA helices of the 16S rRNA. Functionally, forms an intersubunit bridge (bridge B4) with the 23S rRNA of the 50S subunit in the ribosome. In Bradyrhizobium sp. (strain BTAi1 / ATCC BAA-1182), this protein is Small ribosomal subunit protein uS15.